The primary structure comprises 203 residues: Protein GrpE (203 aa).

Residues 1 to 10 (MSNESIKAEQ) show a composition bias toward basic and acidic residues. The disordered stretch occupies residues 1 to 20 (MSNESIKAEQDLIQEGVESE).

It belongs to the GrpE family. Homodimer.

It localises to the cytoplasm. Functionally, participates actively in the response to hyperosmotic and heat shock by preventing the aggregation of stress-denatured proteins, in association with DnaK and GrpE. It is the nucleotide exchange factor for DnaK and may function as a thermosensor. Unfolded proteins bind initially to DnaJ; upon interaction with the DnaJ-bound protein, DnaK hydrolyzes its bound ATP, resulting in the formation of a stable complex. GrpE releases ADP from DnaK; ATP binding to DnaK triggers the release of the substrate protein, thus completing the reaction cycle. Several rounds of ATP-dependent interactions between DnaJ, DnaK and GrpE are required for fully efficient folding. This Shewanella sp. (strain MR-4) protein is Protein GrpE.